The following is a 124-amino-acid chain: Fluoride-specific ion channel FluC (124 aa).

Transmembrane regions (helical) follow at residues 2-22, 35-55, 71-91, and 100-120; these read LNIA…RWLI, TGTL…IAWF, TGFC…VALF, and LGTM…AFWL. The Na(+) site is built by Gly-75 and Thr-78.

Belongs to the fluoride channel Fluc/FEX (TC 1.A.43) family.

It localises to the cell inner membrane. It carries out the reaction fluoride(in) = fluoride(out). With respect to regulation, na(+) is not transported, but it plays an essential structural role and its presence is essential for fluoride channel function. Fluoride-specific ion channel. Important for reducing fluoride concentration in the cell, thus reducing its toxicity. The protein is Fluoride-specific ion channel FluC of Proteus mirabilis (strain HI4320).